Here is a 94-residue protein sequence, read N- to C-terminus: Co-chaperonin GroES (94 aa).

Belongs to the GroES chaperonin family. As to quaternary structure, heptamer of 7 subunits arranged in a ring. Interacts with the chaperonin GroEL.

The protein resides in the cytoplasm. In terms of biological role, together with the chaperonin GroEL, plays an essential role in assisting protein folding. The GroEL-GroES system forms a nano-cage that allows encapsulation of the non-native substrate proteins and provides a physical environment optimized to promote and accelerate protein folding. GroES binds to the apical surface of the GroEL ring, thereby capping the opening of the GroEL channel. The polypeptide is Co-chaperonin GroES (Clostridium perfringens (strain ATCC 13124 / DSM 756 / JCM 1290 / NCIMB 6125 / NCTC 8237 / Type A)).